Reading from the N-terminus, the 504-residue chain is L-carnitine/gamma-butyrobetaine antiporter (504 aa).

Helical transmembrane passes span 10-30 (IEPKVFFPPLIIVGILCWLTV), 51-71 (WGWAFEWYMVVMLFGWFWLVF), 92-112 (IFMMFASCTSAAVLFWGSIEI), 143-163 (GPLPWATYSFLSVAFAYFFFV), 195-215 (FYLVALIFAMGTSLGLATPLV), 231-251 (LDAIIITCWIILNAICVACGL), 263-283 (SYLSFLMLGWVFIVSGASFIM), 316-336 (WTVFYWAWWVIYAIQMSIFLA), 347-367 (LCFGMVLGLTASTWILWTVLG), 398-418 (WAALPLSTATMWGFFILCFIA), 446-466 (LLVRIGWSILVGIIGIVLLAL), and 475-495 (AIIAGGCPLFFVNIMVTLSFI).

It belongs to the BCCT transporter (TC 2.A.15) family. CaiT subfamily. As to quaternary structure, homotrimer.

The protein resides in the cell inner membrane. The enzyme catalyses 4-(trimethylamino)butanoate(in) + (R)-carnitine(out) = 4-(trimethylamino)butanoate(out) + (R)-carnitine(in). Its pathway is amine and polyamine metabolism; carnitine metabolism. In terms of biological role, catalyzes the exchange of L-carnitine for gamma-butyrobetaine. The sequence is that of L-carnitine/gamma-butyrobetaine antiporter from Escherichia coli (strain ATCC 8739 / DSM 1576 / NBRC 3972 / NCIMB 8545 / WDCM 00012 / Crooks).